A 429-amino-acid chain; its full sequence is Serine hydroxymethyltransferase (429 aa).

(6S)-5,6,7,8-tetrahydrofolate is bound by residues Leu-125 and 129 to 131 (GHL). Lys-234 is subject to N6-(pyridoxal phosphate)lysine.

Belongs to the SHMT family. Homodimer. Pyridoxal 5'-phosphate is required as a cofactor.

The protein localises to the cytoplasm. The catalysed reaction is (6R)-5,10-methylene-5,6,7,8-tetrahydrofolate + glycine + H2O = (6S)-5,6,7,8-tetrahydrofolate + L-serine. It functions in the pathway one-carbon metabolism; tetrahydrofolate interconversion. Its pathway is amino-acid biosynthesis; glycine biosynthesis; glycine from L-serine: step 1/1. Its function is as follows. Catalyzes the reversible interconversion of serine and glycine with tetrahydrofolate (THF) serving as the one-carbon carrier. This reaction serves as the major source of one-carbon groups required for the biosynthesis of purines, thymidylate, methionine, and other important biomolecules. Also exhibits THF-independent aldolase activity toward beta-hydroxyamino acids, producing glycine and aldehydes, via a retro-aldol mechanism. This chain is Serine hydroxymethyltransferase, found in Allorhizobium ampelinum (strain ATCC BAA-846 / DSM 112012 / S4) (Agrobacterium vitis (strain S4)).